The sequence spans 163 residues: Large ribosomal subunit protein uL22c (163 aa).

This sequence belongs to the universal ribosomal protein uL22 family. In terms of assembly, part of the 50S ribosomal subunit.

The protein localises to the plastid. The protein resides in the chloroplast. This protein binds specifically to 23S rRNA. Functionally, the globular domain of the protein is located near the polypeptide exit tunnel on the outside of the subunit, while an extended beta-hairpin is found that lines the wall of the exit tunnel in the center of the 70S ribosome. In Lobularia maritima (Sweet alyssum), this protein is Large ribosomal subunit protein uL22c (rpl22).